We begin with the raw amino-acid sequence, 431 residues long: Adenylosuccinate synthetase (431 aa).

Residues 13 to 19 (GDEGKGK) and 41 to 43 (GHT) contribute to the GTP site. D14 (proton acceptor) is an active-site residue. Positions 14 and 41 each coordinate Mg(2+). IMP contacts are provided by residues 14–17 (DEGK), 39–42 (NAGH), T130, R144, Q225, T240, and R304. The active-site Proton donor is H42. Residue 300–306 (TTTGRSR) participates in substrate binding. Residues R306, 332 to 334 (KLD), and 414 to 416 (STG) contribute to the GTP site.

The protein belongs to the adenylosuccinate synthetase family. As to quaternary structure, homodimer. It depends on Mg(2+) as a cofactor.

The protein resides in the cytoplasm. The catalysed reaction is IMP + L-aspartate + GTP = N(6)-(1,2-dicarboxyethyl)-AMP + GDP + phosphate + 2 H(+). The protein operates within purine metabolism; AMP biosynthesis via de novo pathway; AMP from IMP: step 1/2. Functionally, plays an important role in the de novo pathway of purine nucleotide biosynthesis. Catalyzes the first committed step in the biosynthesis of AMP from IMP. This is Adenylosuccinate synthetase from Marinobacter nauticus (strain ATCC 700491 / DSM 11845 / VT8) (Marinobacter aquaeolei).